A 922-amino-acid chain; its full sequence is Disintegrin and metalloproteinase domain-containing protein 10 homolog (922 aa).

A signal peptide spans methionine 1 to glycine 26. The propeptide occupies leucine 27 to arginine 228. N-linked (GlcNAc...) asparagine glycosylation is found at asparagine 74, asparagine 185, and asparagine 346. The Extracellular segment spans residues alanine 229–asparagine 745. The Peptidase M12B domain maps to arginine 242–leucine 480. Position 426 (histidine 426) interacts with Zn(2+). Glutamate 427 is an active-site residue. Residues histidine 430 and histidine 436 each coordinate Zn(2+). A disulfide bridge links cysteine 442 with cysteine 471. Asparagine 475 carries an N-linked (GlcNAc...) asparagine glycan. The Disintegrin domain occupies serine 511–aspartate 615. 5 cysteine pairs are disulfide-bonded: cysteine 542–cysteine 577, cysteine 564–cysteine 572, cysteine 588–cysteine 607, cysteine 594–cysteine 626, and cysteine 619–cysteine 631. N-linked (GlcNAc...) asparagine glycosylation occurs at asparagine 632. Cystine bridges form between cysteine 636–cysteine 659, cysteine 644–cysteine 665, cysteine 655–cysteine 707, and cysteine 700–cysteine 713. Asparagine 677 carries an N-linked (GlcNAc...) asparagine glycan. A helical transmembrane segment spans residues tryptophan 746–cysteine 766. Over cysteine 767–lysine 922 the chain is Cytoplasmic. Disordered stretches follow at residues glutamine 797–proline 837 and proline 864–lysine 922. Over residues alanine 805–proline 834 the composition is skewed to low complexity.

May interact with tetraspanin tsp-12; the interaction promotes sup-17 cell membrane localization. Zn(2+) is required as a cofactor. As to expression, expressed in the germline.

The protein localises to the cell membrane. Its subcellular location is the basolateral cell membrane. The protein resides in the cytoplasmic vesicle membrane. It catalyses the reaction Endopeptidase of broad specificity.. Functionally, metalloprotease. Acts together with protease adm-4 and in a cell autonomous manner to facilitate lin-12/Notch signaling during developmental cell fate decision, including anchor cell/ventral uterine precursor cell decision and vulva precursor cell specification. By modulating glp-1/Notch signaling, plays a role in germline development. Probably by modulating BMP-like Sma/Mab signaling via the shedding of unc-40 ectodomain, involved in the regulation of body size and mesoderm development. Probably by shedding ephrin efn-4, regulates axon guidance of SDQL neuron during development. The polypeptide is Disintegrin and metalloproteinase domain-containing protein 10 homolog (Caenorhabditis elegans).